Consider the following 872-residue polypeptide: Alanine--tRNA ligase (872 aa).

Residues H566, H570, C668, and H672 each coordinate Zn(2+).

This sequence belongs to the class-II aminoacyl-tRNA synthetase family. The cofactor is Zn(2+).

The protein localises to the cytoplasm. The enzyme catalyses tRNA(Ala) + L-alanine + ATP = L-alanyl-tRNA(Ala) + AMP + diphosphate. Catalyzes the attachment of alanine to tRNA(Ala) in a two-step reaction: alanine is first activated by ATP to form Ala-AMP and then transferred to the acceptor end of tRNA(Ala). Also edits incorrectly charged Ser-tRNA(Ala) and Gly-tRNA(Ala) via its editing domain. In Lactococcus lactis subsp. cremoris (strain MG1363), this protein is Alanine--tRNA ligase.